The sequence spans 107 residues: Stellacyanin (107 aa).

Positions 1–105 (TVYTVGDSAG…GQKVHINVTV (105 aa)) constitute a Phytocyanin domain. Residue Asn-28 is glycosylated (N-linked (GlcNAc...) asparagine). His-46 provides a ligand contact to Cu cation. Cys-59 and Cys-93 are joined by a disulfide. N-linked (GlcNAc...) asparagine glycosylation is present at Asn-60. Cu cation contacts are provided by Cys-87, His-92, and Gln-97. A glycan (N-linked (GlcNAc...) asparagine) is linked at Asn-102.

This is Stellacyanin from Toxicodendron vernicifluum (Japanese lacquer tree).